The sequence spans 156 residues: MPRRRVAAKRDVLDDPKYGSQILAKFMNHVMESGKKAVAERIVYGALEKVKERKNSDPLEIFEKALDAIAPLVEVKSRRVGGATYQVPVEVRPSRRNALAMRWLVDFARKRGEKSMALRLAGELMDAAEGKGAAVKKREDVHRMAEANKAFSHYRF.

The protein belongs to the universal ribosomal protein uS7 family. As to quaternary structure, part of the 30S ribosomal subunit. Contacts proteins S9 and S11.

Functionally, one of the primary rRNA binding proteins, it binds directly to 16S rRNA where it nucleates assembly of the head domain of the 30S subunit. Is located at the subunit interface close to the decoding center, probably blocks exit of the E-site tRNA. The sequence is that of Small ribosomal subunit protein uS7 from Pseudomonas syringae pv. syringae (strain B728a).